The following is a 287-amino-acid chain: ADP-dependent (S)-NAD(P)H-hydrate dehydratase (287 aa).

Residues Gly-7 to Phe-283 form the YjeF C-terminal domain. 2 residues coordinate (6S)-NADPHX: Ala-42 and His-159. AMP-binding positions include Lys-196–Asp-200 and Gly-224. A (6S)-NADPHX-binding site is contributed by Asp-225.

Belongs to the NnrD/CARKD family. Homotetramer. Mg(2+) serves as cofactor.

The catalysed reaction is (6S)-NADHX + ADP = AMP + phosphate + NADH + H(+). It catalyses the reaction (6S)-NADPHX + ADP = AMP + phosphate + NADPH + H(+). Its function is as follows. Catalyzes the dehydration of the S-form of NAD(P)HX at the expense of ADP, which is converted to AMP. Together with NAD(P)HX epimerase, which catalyzes the epimerization of the S- and R-forms, the enzyme allows the repair of both epimers of NAD(P)HX, a damaged form of NAD(P)H that is a result of enzymatic or heat-dependent hydration. The polypeptide is ADP-dependent (S)-NAD(P)H-hydrate dehydratase (Cenarchaeum symbiosum (strain A)).